We begin with the raw amino-acid sequence, 236 residues long: Thiamine import ATP-binding protein ThiQ (236 aa).

The 229-residue stretch at 2 to 230 (LKLEKITYLY…SAAKASVLGI (229 aa)) folds into the ABC transporter domain. 32 to 39 (GPSGAGKS) contacts ATP.

The protein belongs to the ABC transporter superfamily. Thiamine importer (TC 3.A.1.19.1) family. As to quaternary structure, the complex is composed of two ATP-binding proteins (ThiQ), two transmembrane proteins (ThiP) and a solute-binding protein (ThiB).

It is found in the cell inner membrane. The catalysed reaction is thiamine(out) + ATP + H2O = thiamine(in) + ADP + phosphate + H(+). In terms of biological role, part of the ABC transporter complex ThiBPQ involved in thiamine import. Responsible for energy coupling to the transport system. This Yersinia pseudotuberculosis serotype I (strain IP32953) protein is Thiamine import ATP-binding protein ThiQ.